Consider the following 494-residue polypeptide: Amidophosphoribosyltransferase (494 aa).

Residues 1-10 (MSNYSGLNEE) constitute a propeptide that is removed on maturation. Cysteine 11 (nucleophile) is an active-site residue. One can recognise a Glutamine amidotransferase type-2 domain in the interval 11-231 (CGVFGIWNHP…AGEYVVITDE (221 aa)). The Mg(2+) site is built by serine 294, aspartate 356, and aspartate 357.

The protein in the C-terminal section; belongs to the purine/pyrimidine phosphoribosyltransferase family. Mg(2+) serves as cofactor.

The enzyme catalyses 5-phospho-beta-D-ribosylamine + L-glutamate + diphosphate = 5-phospho-alpha-D-ribose 1-diphosphate + L-glutamine + H2O. It participates in purine metabolism; IMP biosynthesis via de novo pathway; N(1)-(5-phospho-D-ribosyl)glycinamide from 5-phospho-alpha-D-ribose 1-diphosphate: step 1/2. Catalyzes the formation of phosphoribosylamine from phosphoribosylpyrophosphate (PRPP) and glutamine. The polypeptide is Amidophosphoribosyltransferase (Staphylococcus epidermidis (strain ATCC 35984 / DSM 28319 / BCRC 17069 / CCUG 31568 / BM 3577 / RP62A)).